A 311-amino-acid polypeptide reads, in one-letter code: Probable manganese-dependent inorganic pyrophosphatase (311 aa).

The Mn(2+) site is built by His9, Asp13, Asp15, Asp77, His99, and Asp151.

Belongs to the PPase class C family. Requires Mn(2+) as cofactor.

Its subcellular location is the cytoplasm. The enzyme catalyses diphosphate + H2O = 2 phosphate + H(+). In Streptococcus equi subsp. zooepidemicus (strain H70), this protein is Probable manganese-dependent inorganic pyrophosphatase.